Consider the following 228-residue polypeptide: Cytidylate kinase (228 aa).

Position 10-18 (10-18) interacts with ATP; it reads GPSGSGKGT.

It belongs to the cytidylate kinase family. Type 1 subfamily.

It localises to the cytoplasm. The enzyme catalyses CMP + ATP = CDP + ADP. It catalyses the reaction dCMP + ATP = dCDP + ADP. The sequence is that of Cytidylate kinase from Acinetobacter baumannii (strain SDF).